Consider the following 161-residue polypeptide: RNA pyrophosphohydrolase (161 aa).

The region spanning 7–149 (KYRPCVGIML…KKEVYKTVIE (143 aa)) is the Nudix hydrolase domain. A Nudix box motif is present at residues 40–61 (GGIDDGEKLEQAALRELLEEVG).

The protein belongs to the Nudix hydrolase family. RppH subfamily. A divalent metal cation serves as cofactor.

Its function is as follows. Accelerates the degradation of transcripts by removing pyrophosphate from the 5'-end of triphosphorylated RNA, leading to a more labile monophosphorylated state that can stimulate subsequent ribonuclease cleavage. This is RNA pyrophosphohydrolase from Wolbachia sp. subsp. Brugia malayi (strain TRS).